The sequence spans 543 residues: CTP synthase (543 aa).

The segment at 1-265 (MTNYIFVTGG…DQLVVDRFGL (265 aa)) is amidoligase domain. S13 lines the CTP pocket. S13 contributes to the UTP binding site. Residues 14-19 (SLGKGI) and D71 each bind ATP. Mg(2+) is bound by residues D71 and E139. CTP is bound by residues 146–148 (DIE), 186–191 (KTKPTQ), and K222. UTP is bound by residues 186 to 191 (KTKPTQ) and K222. 238 to 240 (KDV) contacts ATP. The 252-residue stretch at 290–541 (NIGMIGKYVE…VAAAGKYQKE (252 aa)) folds into the Glutamine amidotransferase type-1 domain. Residue G351 participates in L-glutamine binding. The active-site Nucleophile; for glutamine hydrolysis is the C378. L-glutamine is bound by residues 379 to 382 (LGMQ), E402, and R469. Catalysis depends on residues H514 and E516.

Belongs to the CTP synthase family. As to quaternary structure, homotetramer.

It carries out the reaction UTP + L-glutamine + ATP + H2O = CTP + L-glutamate + ADP + phosphate + 2 H(+). The enzyme catalyses L-glutamine + H2O = L-glutamate + NH4(+). The catalysed reaction is UTP + NH4(+) + ATP = CTP + ADP + phosphate + 2 H(+). It functions in the pathway pyrimidine metabolism; CTP biosynthesis via de novo pathway; CTP from UDP: step 2/2. Allosterically activated by GTP, when glutamine is the substrate; GTP has no effect on the reaction when ammonia is the substrate. The allosteric effector GTP functions by stabilizing the protein conformation that binds the tetrahedral intermediate(s) formed during glutamine hydrolysis. Inhibited by the product CTP, via allosteric rather than competitive inhibition. In terms of biological role, catalyzes the ATP-dependent amination of UTP to CTP with either L-glutamine or ammonia as the source of nitrogen. Regulates intracellular CTP levels through interactions with the four ribonucleotide triphosphates. The protein is CTP synthase of Alteromonas mediterranea (strain DSM 17117 / CIP 110805 / LMG 28347 / Deep ecotype).